A 500-amino-acid chain; its full sequence is Cytochrome P450 71B34 (500 aa).

The chain crosses the membrane as a helical span at residues 1 to 21; the sequence is MTNIWLLSLIFVICILVAVFN. C440 provides a ligand contact to heme.

This sequence belongs to the cytochrome P450 family. Heme is required as a cofactor.

The protein resides in the membrane. This chain is Cytochrome P450 71B34 (CYP71B34), found in Arabidopsis thaliana (Mouse-ear cress).